The following is a 275-amino-acid chain: Fos-related antigen 1 (275 aa).

2 disordered regions span residues 1–33 (MYRD…QTVQ) and 71–115 (TYPQ…VRRE). Positions 7-33 (EPGPSSGAGSAYGRPAQPQQAQTQTVQ) are enriched in low complexity. Residues 107-170 (EERRRVRRER…ERLELVLEAH (64 aa)) form the bZIP domain. The interval 109 to 129 (RRRVRRERNKLAAAKCRNRRK) is basic motif. The tract at residues 135–163 (LQAETDKLEDEKSGLQREIEELQKQKERL) is leucine-zipper. Residues 171–184 (RPICKIPEEDKKDT) show a composition bias toward basic and acidic residues. The segment at 171-275 (RPICKIPEED…PLGSPTLLAL (105 aa)) is disordered. Low complexity-rich tracts occupy residues 185 to 194 (GGTSSTSGAG), 219 to 237 (LHTP…TPSL), and 256 to 275 (SSSS…LLAL). Serine 269 carries the post-translational modification Phosphoserine.

This sequence belongs to the bZIP family. Fos subfamily. In terms of assembly, heterodimer. Interacts with the BAF multiprotein chromatin-remodeling complex subunits SMARCB1 and SMARCD1. Interacts with ARID1A and JUN.

Its subcellular location is the nucleus. The chain is Fos-related antigen 1 (Fosl1) from Rattus norvegicus (Rat).